Reading from the N-terminus, the 129-residue chain is Glycine cleavage system H protein (129 aa).

One can recognise a Lipoyl-binding domain in the interval 24–106 (SYTVGISEHA…YGDGWFFRIM (83 aa)). At Lys-65 the chain carries N6-lipoyllysine.

This sequence belongs to the GcvH family. In terms of assembly, the glycine cleavage system is composed of four proteins: P, T, L and H. (R)-lipoate is required as a cofactor.

Its function is as follows. The glycine cleavage system catalyzes the degradation of glycine. The H protein shuttles the methylamine group of glycine from the P protein to the T protein. This is Glycine cleavage system H protein from Shewanella loihica (strain ATCC BAA-1088 / PV-4).